We begin with the raw amino-acid sequence, 234 residues long: Purine nucleoside phosphorylase DeoD-type (234 aa).

Residue His5 participates in a purine D-ribonucleoside binding. Residues Gly21, Arg25, Arg44, and 88-91 (RVGT) each bind phosphate. A purine D-ribonucleoside contacts are provided by residues 178–180 (EME) and 202–203 (SD). Asp203 acts as the Proton donor in catalysis.

This sequence belongs to the PNP/UDP phosphorylase family. As to quaternary structure, homohexamer; trimer of homodimers.

The enzyme catalyses a purine D-ribonucleoside + phosphate = a purine nucleobase + alpha-D-ribose 1-phosphate. The catalysed reaction is a purine 2'-deoxy-D-ribonucleoside + phosphate = a purine nucleobase + 2-deoxy-alpha-D-ribose 1-phosphate. In terms of biological role, catalyzes the reversible phosphorolytic breakdown of the N-glycosidic bond in the beta-(deoxy)ribonucleoside molecules, with the formation of the corresponding free purine bases and pentose-1-phosphate. This is Purine nucleoside phosphorylase DeoD-type from Lactococcus lactis subsp. cremoris (strain MG1363).